Reading from the N-terminus, the 107-residue chain is Conantokin-R (107 aa).

A signal peptide spans 1–24 (MQLYTYLYLLVSLVTFYLILGTGT). Residues 25-80 (LGHGGALTERRSTDATALKPEPVLLQKSSARSTDDNGNDRLTQMKRILKKRGNKAR) constitute a propeptide that is removed on maturation. Residues 26–64 (GHGGALTERRSTDATALKPEPVLLQKSSARSTDDNGNDR) form a disordered region. Glu-83, Glu-84, Glu-91, and Glu-95 each carry 4-carboxyglutamate. A divalent metal cation-binding residues include Glu-91 and Glu-95. Cys-101 and Cys-105 are joined by a disulfide.

Belongs to the conotoxin B superfamily. Ca(2+) is required as a cofactor. It depends on Mg(2+) as a cofactor. As to expression, expressed by the venom duct.

The protein localises to the secreted. Functionally, conantokins inhibit N-methyl-D-aspartate (NMDA) receptors. This toxin is potent in the following order of preference: NR2B approximately NR2A/GRIN2A &gt; NR2C/GRIN2C &gt;&gt; NR2D/GRIN2D. Induces sleep-like symptoms in young mice. Is a highly potent anticonvulsant compound. This Conus radiatus (Rayed cone) protein is Conantokin-R.